The sequence spans 282 residues: Bifunctional protein FolD (282 aa).

NADP(+)-binding positions include 165–167 (GRS) and S190.

This sequence belongs to the tetrahydrofolate dehydrogenase/cyclohydrolase family. In terms of assembly, homodimer.

The enzyme catalyses (6R)-5,10-methylene-5,6,7,8-tetrahydrofolate + NADP(+) = (6R)-5,10-methenyltetrahydrofolate + NADPH. It carries out the reaction (6R)-5,10-methenyltetrahydrofolate + H2O = (6R)-10-formyltetrahydrofolate + H(+). The protein operates within one-carbon metabolism; tetrahydrofolate interconversion. Its function is as follows. Catalyzes the oxidation of 5,10-methylenetetrahydrofolate to 5,10-methenyltetrahydrofolate and then the hydrolysis of 5,10-methenyltetrahydrofolate to 10-formyltetrahydrofolate. The polypeptide is Bifunctional protein FolD (Acinetobacter baumannii (strain ATCC 17978 / DSM 105126 / CIP 53.77 / LMG 1025 / NCDC KC755 / 5377)).